The sequence spans 206 residues: Ribosomal RNA large subunit methyltransferase E (206 aa).

5 residues coordinate S-adenosyl-L-methionine: glycine 60, tryptophan 62, aspartate 80, aspartate 96, and aspartate 121. Lysine 161 serves as the catalytic Proton acceptor.

Belongs to the class I-like SAM-binding methyltransferase superfamily. RNA methyltransferase RlmE family.

It localises to the cytoplasm. The enzyme catalyses uridine(2552) in 23S rRNA + S-adenosyl-L-methionine = 2'-O-methyluridine(2552) in 23S rRNA + S-adenosyl-L-homocysteine + H(+). Functionally, specifically methylates the uridine in position 2552 of 23S rRNA at the 2'-O position of the ribose in the fully assembled 50S ribosomal subunit. This chain is Ribosomal RNA large subunit methyltransferase E, found in Legionella pneumophila (strain Paris).